The chain runs to 782 residues: MKISSGAINFSTIPNQVKKLITSIREHTKNGLTSKITSVKNTHTSLNEKFKTGKDSPIEFALPQKIKDFFQPKDKNTLNKTLITVKNIKDTNNAGKKNISAEDVSKMNAAFMRKHIANQTCDYNYRMTGAAPLPGGVSVSANNRPTVSEGRTPPVSPSLSLQATSSPSSPADWAKKLTDAVLRQKAGETLTAADRDFSNADFRNITFSKILPPSFMERDGDIIKGFNFSNSKFTYSDISHLHFDECRFTYSTLSDVVCSNTKFSNSDMNEVFLQYSITTQQQPSFIDTTLKNTLIRHKANLSGVILNEPDNSSPPSVSRGGNFIRLGDIWLQMPLLWTENAADGFLNHEHNNGKSILMTIDSLPDKYSQEKVRAMEDLVKSLRDGRLTEAGIRPVESSLVSVLAHPPYTQSALISEWLGPVQERFFAHQCQTYNDVPLPAPDTYYQQRLLPVLLDSFDRNSAAMTTHSGLFNQVILHCMTGVDCTDGIRQKAAALYEQYLAHPAVSPHIHNGLFGNYDGSPDWTTRAADNFLLLSSQDSDTAMMLSTDTLLTMLNPTPDTAWDNFYLLRAGENVSTAQISPVELFRHDFPVFLAAFNQQATQRRFGELIDIILSTEEHGELNQQFIAATNQKHSTVKLIDDASVSRLATIFAPLLPEGKLSPAHYQHILSAYHLTDATPQKQAETLFCLSTAFARYSSSAIFGTEHDSPPALRGYAEALMQKAWELSPAIFPSSEQFTDWSDRFHGLHGAFTCTSVVADSMQRHARKYFPSVLSSILPLAWA.

A disordered region spans residues 137–171; sequence VSVSANNRPTVSEGRTPPVSPSLSLQATSSPSSPA. Positions 157–171 are enriched in low complexity; the sequence is PSLSLQATSSPSSPA. Cys753 serves as the catalytic Glycyl thioester intermediate.

This sequence belongs to the SopA E3 ligase family. In terms of processing, ubiquitinated in the presence of host E1 ubiquitin-activating enzyme, E2 ubiquitin-conjugating enzyme and ubiquitin.

Its subcellular location is the secreted. It localises to the host cell. The catalysed reaction is S-ubiquitinyl-[E2 ubiquitin-conjugating enzyme]-L-cysteine + [acceptor protein]-L-lysine = [E2 ubiquitin-conjugating enzyme]-L-cysteine + N(6)-ubiquitinyl-[acceptor protein]-L-lysine.. Effector proteins function to alter host cell physiology and promote bacterial survival in host tissues. This protein is an E3 ubiquitin ligase that interferes with host's ubiquitination pathway. This Salmonella heidelberg (strain SL476) protein is E3 ubiquitin-protein ligase SopA (sopA).